Here is a 90-residue protein sequence, read N- to C-terminus: Acylphosphatase (90 aa).

The 86-residue stretch at 5 to 90 folds into the Acylphosphatase-like domain; the sequence is CERFIVKGHV…YKPFRGFKIL (86 aa). Catalysis depends on residues Arg20 and Asn38.

Belongs to the acylphosphatase family.

It carries out the reaction an acyl phosphate + H2O = a carboxylate + phosphate + H(+). This chain is Acylphosphatase (acyP), found in Vibrio parahaemolyticus serotype O3:K6 (strain RIMD 2210633).